Reading from the N-terminus, the 303-residue chain is Uricase (303 aa).

Residue A2 is modified to N-acetylalanine. An N6-acetyllysine; alternate mark is found at K10 and K23. N6-succinyllysine; alternate is present on residues K10 and K23. The active-site Charge relay system is K23. K27 and K36 each carry N6-acetyllysine. S39 and S63 each carry phosphoserine. Catalysis depends on T68, which acts as the Charge relay system. Urate contacts are provided by T68 and D69. An N6-acetyllysine mark is found at K118, K122, and K164. F170 provides a ligand contact to urate. An N6-acetyllysine mark is found at K175 and K185. Position 187 (R187) interacts with urate. K220 and K227 each carry N6-acetyllysine; alternate. N6-succinyllysine; alternate occurs at positions 220 and 227. At S231 the chain carries Phosphoserine. Residues V234, Q235, and N261 each contribute to the urate site. Catalysis depends on H263, which acts as the Charge relay system. The residue at position 277 (K277) is an N6-acetyllysine. Y288 bears the Phosphotyrosine mark. Residues 301-303 carry the Microbody targeting signal motif; that stretch reads SRL.

Belongs to the uricase family. Acetylation of Lys-118, Lys-164 and Lys-290 is observed in liver mitochondria from fasted mice but not from fed mice. May be deacetylated by Sirt5; however it is unclear whether Sirt5 mediates deacetylation or desuccinylation of Uox; additional evidence is required to validate these results.

The protein localises to the peroxisome. The protein resides in the mitochondrion. It catalyses the reaction urate + O2 + H2O = 5-hydroxyisourate + H2O2. Its pathway is purine metabolism; urate degradation; (S)-allantoin from urate: step 1/3. In terms of biological role, catalyzes the oxidation of uric acid to 5-hydroxyisourate, which is further processed to form (S)-allantoin. The polypeptide is Uricase (Uox) (Mus musculus (Mouse)).